The following is a 304-amino-acid chain: Capsid protein (304 aa).

Composition is skewed to basic and acidic residues over residues 1–24 and 32–54; these read MGDS…REAR and FEGK…EMSL. The tract at residues 1 to 54 is disordered; sequence MGDSTKKAETAKDVGTSQEKREARPLPTAADFEGKDTSEDTDGRAADADGEMSL.

Belongs to the potexviruses coat protein family.

Its subcellular location is the virion. Functionally, required for genome encapsidation. Forms ribonucleoprotein complexes along with TGB1 helicase and viral RNA. In Potato virus M (strain German) (PVM), this protein is Capsid protein.